The following is a 361-amino-acid chain: Phospho-N-acetylmuramoyl-pentapeptide-transferase (361 aa).

The next 10 membrane-spanning stretches (helical) occupy residues 28 to 48 (LAII…IKFL), 74 to 94 (TMGG…LADL), 99 to 119 (IWIT…DDYA), 133 to 153 (SKLL…EYLD), 168 to 188 (LSLD…VGSS), 203 to 223 (VPIA…GNLI), 236 to 256 (TGEL…FLWF), 263 to 283 (VFMG…ISVI), 288 to 308 (IVLA…ILQV), and 338 to 358 (KVVI…LSSL).

Belongs to the glycosyltransferase 4 family. MraY subfamily. Mg(2+) is required as a cofactor.

It is found in the cell membrane. The catalysed reaction is UDP-N-acetyl-alpha-D-muramoyl-L-alanyl-gamma-D-glutamyl-meso-2,6-diaminopimeloyl-D-alanyl-D-alanine + di-trans,octa-cis-undecaprenyl phosphate = di-trans,octa-cis-undecaprenyl diphospho-N-acetyl-alpha-D-muramoyl-L-alanyl-D-glutamyl-meso-2,6-diaminopimeloyl-D-alanyl-D-alanine + UMP. It functions in the pathway cell wall biogenesis; peptidoglycan biosynthesis. In terms of biological role, catalyzes the initial step of the lipid cycle reactions in the biosynthesis of the cell wall peptidoglycan: transfers peptidoglycan precursor phospho-MurNAc-pentapeptide from UDP-MurNAc-pentapeptide onto the lipid carrier undecaprenyl phosphate, yielding undecaprenyl-pyrophosphoryl-MurNAc-pentapeptide, known as lipid I. This Rickettsia montanensis protein is Phospho-N-acetylmuramoyl-pentapeptide-transferase.